A 149-amino-acid chain; its full sequence is Chromophore lyase CpcS/CpeS homolog (149 aa).

It belongs to the CpcS/CpeS biliprotein lyase family.

It is found in the plastid. It localises to the chloroplast. Might function to covalently attach a chromophore to Cys residue(s) of phycobiliproteins. This is Chromophore lyase CpcS/CpeS homolog from Porphyra purpurea (Red seaweed).